We begin with the raw amino-acid sequence, 120 residues long: Large ribosomal subunit protein uL18 (120 aa).

The protein belongs to the universal ribosomal protein uL18 family. As to quaternary structure, part of the 50S ribosomal subunit; part of the 5S rRNA/L5/L18/L25 subcomplex. Contacts the 5S and 23S rRNAs.

This is one of the proteins that bind and probably mediate the attachment of the 5S RNA into the large ribosomal subunit, where it forms part of the central protuberance. This is Large ribosomal subunit protein uL18 from Xanthobacter autotrophicus (strain ATCC BAA-1158 / Py2).